The following is a 268-amino-acid chain: Helix-loop-helix protein 6 (268 aa).

Over residues 117-130 (QSQVQPQLPTQSQP) the composition is skewed to low complexity. Residues 117–140 (QSQVQPQLPTQSQPKPSSKASLDT) are disordered. Residues 131–140 (KPSSKASLDT) show a composition bias toward polar residues. Positions 173–225 (SSVWKRNERERCRVRNVNDGYERLRKHLPVHFDEKRISKVDTLRLAIRYIKHL) constitute a bHLH domain.

As to expression, expressed in the gland cells of the pharynx and weakly in the pharyngeal neuron.

It localises to the nucleus. Functionally, transcription factor that regulates the development of the g2 pharyngeal gland cells and pharyngeal gland function and thereby is required for feeding. Required for the expression of a number of genes in the pharyngeal gland, possibly by binding to the E box motif (5'-CANNTG-3') in the promoter region of these genes. Positively regulates the expression of genes encoding mucin-like proteins, which lubricate the pharyngeal tract to ensure efficient passage of the bacterial food source. Exhibits pharyngeal gland-specific positive autoregulation activity. The polypeptide is Helix-loop-helix protein 6 (hlh-6) (Caenorhabditis elegans).